The chain runs to 368 residues: Peptide chain release factor 2 (368 aa).

Q250 is modified (N5-methylglutamine).

This sequence belongs to the prokaryotic/mitochondrial release factor family. Post-translationally, methylated by PrmC. Methylation increases the termination efficiency of RF2.

It localises to the cytoplasm. In terms of biological role, peptide chain release factor 2 directs the termination of translation in response to the peptide chain termination codons UGA and UAA. In Rickettsia africae (strain ESF-5), this protein is Peptide chain release factor 2.